A 494-amino-acid chain; its full sequence is Probable cobyric acid synthase (494 aa).

One can recognise a GATase cobBQ-type domain in the interval 249–447 (SVRIAVIRLP…LHGIFFNRRF (199 aa)). C331 functions as the Nucleophile in the catalytic mechanism. H439 is a catalytic residue.

The protein belongs to the CobB/CobQ family. CobQ subfamily.

It participates in cofactor biosynthesis; adenosylcobalamin biosynthesis. Its function is as follows. Catalyzes amidations at positions B, D, E, and G on adenosylcobyrinic A,C-diamide. NH(2) groups are provided by glutamine, and one molecule of ATP is hydrogenolyzed for each amidation. The sequence is that of Probable cobyric acid synthase from Methanopyrus kandleri (strain AV19 / DSM 6324 / JCM 9639 / NBRC 100938).